We begin with the raw amino-acid sequence, 209 residues long: MDLHNIREDYSKQELSQAHCHADPIQQFEQWLEEAITAKANEPTAMNVATVLDGKPTSRIVLLKEVNPNGFVFFTNYQSRKGQAIEQNPYVALTFFWAELERSVRIEGRIEKISAEQSDNYFAGRPYTSRVGAWASNQSQVLSSKSELVAKAALIAAKHPLHVPRPPHWGGYIVLPERIEFWQGRPSRLHDRICYRLVEGAWHKERLSP.

Substrate-binding positions include 7-10 (REDY) and lysine 64. FMN is bound by residues 59-64 (RIVLLK), 74-75 (FT), arginine 80, and lysine 81. Tyrosine 121, arginine 125, and serine 129 together coordinate substrate. Residues 138–139 (QS) and tryptophan 182 contribute to the FMN site. 188–190 (RLH) lines the substrate pocket. Residue arginine 192 coordinates FMN.

Belongs to the pyridoxamine 5'-phosphate oxidase family. Homodimer. The cofactor is FMN.

The catalysed reaction is pyridoxamine 5'-phosphate + O2 + H2O = pyridoxal 5'-phosphate + H2O2 + NH4(+). The enzyme catalyses pyridoxine 5'-phosphate + O2 = pyridoxal 5'-phosphate + H2O2. It functions in the pathway cofactor metabolism; pyridoxal 5'-phosphate salvage; pyridoxal 5'-phosphate from pyridoxamine 5'-phosphate: step 1/1. The protein operates within cofactor metabolism; pyridoxal 5'-phosphate salvage; pyridoxal 5'-phosphate from pyridoxine 5'-phosphate: step 1/1. In terms of biological role, catalyzes the oxidation of either pyridoxine 5'-phosphate (PNP) or pyridoxamine 5'-phosphate (PMP) into pyridoxal 5'-phosphate (PLP). The protein is Pyridoxine/pyridoxamine 5'-phosphate oxidase of Actinobacillus pleuropneumoniae serotype 7 (strain AP76).